A 319-amino-acid chain; its full sequence is HTH-type transcriptional regulator YidZ (319 aa).

The 58-residue stretch at 8-65 (LDLNLLLCLQLLMQERSVTKAAKRMNVTPSAVSKSLAKLRAWFDDPLFVNSPLGLSPT) folds into the HTH lysR-type domain. The H-T-H motif DNA-binding region spans 25–44 (VTKAAKRMNVTPSAVSKSLA).

It belongs to the LysR transcriptional regulatory family.

Involved in anaerobic NO protection. The protein is HTH-type transcriptional regulator YidZ of Escherichia coli O139:H28 (strain E24377A / ETEC).